Consider the following 81-residue polypeptide: Dermaseptin-B7 (81 aa).

Residues 1 to 22 (MASLKKSLFLVLFLGLVSLSIC) form the signal peptide. Positions 23–44 (EEEKRENEDEEEQEDDEQSEMK) are excised as a propeptide. Residues 24–48 (EEKRENEDEEEQEDDEQSEMKRGLW) form a disordered region. Over residues 30-40 (EDEEEQEDDEQ) the composition is skewed to acidic residues. At V78 the chain carries Valine amide. Residues 80–81 (EQ) constitute a propeptide that is removed on maturation.

This sequence belongs to the frog skin active peptide (FSAP) family. Dermaseptin subfamily. Expressed by the skin glands.

Its subcellular location is the secreted. In terms of biological role, has antimicrobial activity. The sequence is that of Dermaseptin-B7 (DRG1) from Phyllomedusa bicolor (Two-colored leaf frog).